The sequence spans 346 residues: Nucleoplasmin-like protein ANO39 (346 aa).

At S2 the chain carries N-acetylserine. N85 carries N-linked (GlcNAc...) asparagine glycosylation. Residues D123–E141 show a composition bias toward acidic residues. Residues D123–L285 form a disordered region. S145 carries the post-translational modification Phosphoserine; by CDC2. Over residues A171–K180 the composition is skewed to basic and acidic residues. A compositionally biased stretch (acidic residues) spans E181–S247. N264 carries N-linked (GlcNAc...) asparagine glycosylation. The segment covering G271–L285 has biased composition (basic and acidic residues).

This sequence belongs to the nucleoplasmin family. Post-translationally, phosphorylation occurs in oocytes during the progression of the first meiotic M phase. No phosphorylation is observed in immature oocytes. As to expression, expressed specifically in the oocytes of the ovaries.

It is found in the nucleus. It localises to the nucleolus. The protein localises to the cytoplasm. Binds double-stranded RNA and both single-stranded and double-stranded DNA. In Patiria pectinifera (Starfish), this protein is Nucleoplasmin-like protein ANO39.